The primary structure comprises 1225 residues: Mediator of RNA polymerase II transcription subunit 13 (1225 aa).

Belongs to the Mediator complex subunit 13 family. As to quaternary structure, component of the srb8-11 complex which consists of rb8, srb9(TRAP240), srb10 and srb11. The srb8-11 complex associates with the Mediator complex thereby blocking association with RNA polymerase II and leading to reduced transcriptional activation by Mediator.

It is found in the nucleus. Its function is as follows. Component of the srb8-11 complex. The srb8-11 complex is a regulatory module of the Mediator complex which is itself involved in regulation of basal and activated RNA polymerase II-dependent transcription. The srb8-11 complex may be involved in the transcriptional repression of a subset of genes regulated by Mediator. It may inhibit the association of the Mediator complex with RNA polymerase II to form the holoenzyme complex. The protein is Mediator of RNA polymerase II transcription subunit 13 (srb9) of Schizosaccharomyces pombe (strain 972 / ATCC 24843) (Fission yeast).